The primary structure comprises 92 residues: DNA-directed RNA polymerase subunit Rpo11 (92 aa).

Belongs to the archaeal Rpo11/eukaryotic RPB11/RPC19 RNA polymerase subunit family. Part of the RNA polymerase complex.

It localises to the cytoplasm. The enzyme catalyses RNA(n) + a ribonucleoside 5'-triphosphate = RNA(n+1) + diphosphate. DNA-dependent RNA polymerase (RNAP) catalyzes the transcription of DNA into RNA using the four ribonucleoside triphosphates as substrates. This Halorubrum lacusprofundi (strain ATCC 49239 / DSM 5036 / JCM 8891 / ACAM 34) protein is DNA-directed RNA polymerase subunit Rpo11.